A 128-amino-acid chain; its full sequence is UPF0325 protein NT01EI_0832 (128 aa).

It belongs to the UPF0325 family.

The chain is UPF0325 protein NT01EI_0832 from Edwardsiella ictaluri (strain 93-146).